Consider the following 574-residue polypeptide: Myo-inositol transporter FST1 (574 aa).

The Cytoplasmic portion of the chain corresponds to 1 to 76 (MGKSRQNSTT…VQFANPKHFT (76 aa)). A helical transmembrane segment spans residues 77–97 (WLLVAFASMGGLLSGLDQSLI). Residues 98–115 (SGANLFLPDDLGLTEHEN) are Extracellular-facing. The helical transmembrane segment at 116–136 (SLVNSGMPLGAVGGALLLSPA) threads the bilayer. Residues 137-143 (NEYFGRK) are Cytoplasmic-facing. The helical transmembrane segment at 144–164 (GAIIISIILYTIGAALEAGSI) threads the bilayer. Topologically, residues 165–173 (NFGMIVSSR) are extracellular. Residues 174–194 (VILGLGVGLEGGTVPVYVAET) traverse the membrane as a helical segment. At 195-205 (VERRIRGNLVS) the chain is on the cytoplasmic side. The helical transmembrane segment at 206-226 (LYQFNIALGEVLGYAVGAIFL) threads the bilayer. Over 227–233 (NVPGNWR) the chain is Extracellular. A helical transmembrane segment spans residues 234–254 (YILGSSLLFSTIMFFGMLFLP). Over 255 to 330 (ESPRFLIHQK…RARRALVYAN (76 aa)) the chain is Cytoplasmic. A helical membrane pass occupies residues 331-351 (IMILLGQLTGVNAIMYYMSVL). Over 352 to 363 (MNQIGFDKKESN) the chain is Extracellular. The chain crosses the membrane as a helical span at residues 364 to 384 (YMSLVGGGSLLLGTIPAIFLM). At 385–390 (ERFGRR) the chain is on the cytoplasmic side. Residues 391 to 411 (FWAITMLPGFFIGLVLIGVSY) traverse the membrane as a helical segment. At 412–426 (QFDVETQLQTVEGLY) the chain is on the extracellular side. A helical membrane pass occupies residues 427–447 (LSGLIIYMGFFGSYACLTWVV). At 448-465 (PSEVYPTYLRSYGMTTSD) the chain is on the cytoplasmic side. Residues 466-486 (ALLFLASFIVTYNFTAMQNAM) form a helical membrane-spanning segment. Over 487–490 (GKTG) the chain is Extracellular. A helical transmembrane segment spans residues 491-511 (LALGFYGGIAFIGEIYQIFFM). Topologically, residues 512-574 (PETKNKTLEE…PKDQVQVSHA (63 aa)) are cytoplasmic.

Belongs to the major facilitator superfamily. Sugar transporter (TC 2.A.1.1) family.

It localises to the cell membrane. It carries out the reaction myo-inositol(out) + H(+)(out) = myo-inositol(in) + H(+)(in). Its function is as follows. Transporter for myo-inositol. Also appears to transport the polyketide mycotoxin fumonisin B1 (FB1). Does not appear to transport hexose sugars. The protein is Myo-inositol transporter FST1 of Gibberella moniliformis (strain M3125 / FGSC 7600) (Maize ear and stalk rot fungus).